Consider the following 263-residue polypeptide: Putative alpha/beta hydrolase L404 (263 aa).

G2 is lipidated: N-myristoyl glycine; by host.

Belongs to the AB hydrolase superfamily.

This Acanthamoeba polyphaga (Amoeba) protein is Putative alpha/beta hydrolase L404.